Consider the following 245-residue polypeptide: Phycocyanobilin:ferredoxin oxidoreductase (245 aa).

The protein belongs to the HY2 family.

It carries out the reaction (2R,3Z)-phycocyanobilin + 4 oxidized [2Fe-2S]-[ferredoxin] = biliverdin IXalpha + 4 reduced [2Fe-2S]-[ferredoxin] + 4 H(+). Its function is as follows. Catalyzes the four-electron reduction of biliverdin IX-alpha (2-electron reduction at both the A and D rings); the reaction proceeds via an isolatable 2-electron intermediate, 181,182-dihydrobiliverdin. The chain is Phycocyanobilin:ferredoxin oxidoreductase from Microcystis aeruginosa (strain NIES-843 / IAM M-2473).